Reading from the N-terminus, the 373-residue chain is NADPH-dependent 3-keto-steroid reductase Hsd3b5 (373 aa).

Residues 10–15, Tyr-155, and Lys-159 each bind NADP(+); that span reads GAGGFL. The active-site Proton donor is Lys-159. The chain crosses the membrane as a helical span at residues 288–308; that stretch reads LSLLYWLAFLLETVSFLLRPV. Lys-350 carries the post-translational modification N6-acetyllysine.

The protein belongs to the 3-beta-HSD family. In terms of tissue distribution, expressed in the male liver, starting in late puberty.

Its subcellular location is the endoplasmic reticulum membrane. It localises to the mitochondrion membrane. The enzyme catalyses a 3beta-hydroxysteroid + NADP(+) = a 3-oxosteroid + NADPH + H(+). The catalysed reaction is 5alpha-androstane-3beta,17beta-diol + NADP(+) = 17beta-hydroxy-5alpha-androstan-3-one + NADPH + H(+). The protein operates within steroid metabolism. Functionally, responsible for the reduction of the oxo group on the C-3 of 5alpha-androstane steroids. Catalyzes the conversion of dihydrotestosterone to its inactive form 5alpha-androstanediol, that does not bind androgen receptor/AR. Does not function as an isomerase. In Mus musculus (Mouse), this protein is NADPH-dependent 3-keto-steroid reductase Hsd3b5.